The primary structure comprises 299 residues: ATP phosphoribosyltransferase (299 aa).

This sequence belongs to the ATP phosphoribosyltransferase family. Long subfamily. In terms of assembly, equilibrium between an active dimeric form, an inactive hexameric form and higher aggregates. Interconversion between the various forms is largely reversible and is influenced by the natural substrates and inhibitors of the enzyme. Requires Mg(2+) as cofactor.

The protein localises to the cytoplasm. The catalysed reaction is 1-(5-phospho-beta-D-ribosyl)-ATP + diphosphate = 5-phospho-alpha-D-ribose 1-diphosphate + ATP. It functions in the pathway amino-acid biosynthesis; L-histidine biosynthesis; L-histidine from 5-phospho-alpha-D-ribose 1-diphosphate: step 1/9. Its activity is regulated as follows. Feedback inhibited by histidine. Catalyzes the condensation of ATP and 5-phosphoribose 1-diphosphate to form N'-(5'-phosphoribosyl)-ATP (PR-ATP). Has a crucial role in the pathway because the rate of histidine biosynthesis seems to be controlled primarily by regulation of HisG enzymatic activity. This is ATP phosphoribosyltransferase from Klebsiella pneumoniae (strain 342).